The sequence spans 190 residues: Inner membrane-spanning protein YciB (190 aa).

6 consecutive transmembrane segments (helical) span residues 3 to 23 (FLFD…AGIY), 24 to 44 (VATT…WFKH), 49 to 69 (AMQW…LIFH), 76 to 96 (WKPT…VVVV), 121 to 141 (LVWA…AYNF), and 149 to 169 (FKLF…SVWL).

Belongs to the YciB family.

The protein localises to the cell inner membrane. Functionally, plays a role in cell envelope biogenesis, maintenance of cell envelope integrity and membrane homeostasis. The protein is Inner membrane-spanning protein YciB of Ralstonia pickettii (strain 12J).